Consider the following 363-residue polypeptide: NAD(P)H-quinone oxidoreductase subunit 1, chloroplastic (363 aa).

The next 6 membrane-spanning stretches (helical) occupy residues Leu-30–Leu-50, Ile-104–Leu-124, Leu-127–Met-147, Phe-253–Val-273, Val-300–Ile-320, and Phe-343–Leu-363.

The protein belongs to the complex I subunit 1 family. As to quaternary structure, NDH is composed of at least 16 different subunits, 5 of which are encoded in the nucleus.

Its subcellular location is the plastid. It is found in the chloroplast thylakoid membrane. It carries out the reaction a plastoquinone + NADH + (n+1) H(+)(in) = a plastoquinol + NAD(+) + n H(+)(out). The enzyme catalyses a plastoquinone + NADPH + (n+1) H(+)(in) = a plastoquinol + NADP(+) + n H(+)(out). Its function is as follows. NDH shuttles electrons from NAD(P)H:plastoquinone, via FMN and iron-sulfur (Fe-S) centers, to quinones in the photosynthetic chain and possibly in a chloroplast respiratory chain. The immediate electron acceptor for the enzyme in this species is believed to be plastoquinone. Couples the redox reaction to proton translocation, and thus conserves the redox energy in a proton gradient. The sequence is that of NAD(P)H-quinone oxidoreductase subunit 1, chloroplastic from Piper cenocladum (Ant piper).